Here is a 246-residue protein sequence, read N- to C-terminus: Large ribosomal subunit protein uL30-like 1 (246 aa).

S54 is modified (phosphoserine).

It belongs to the universal ribosomal protein uL30 family.

The protein is Large ribosomal subunit protein uL30-like 1 (Rpl7l1) of Mus musculus (Mouse).